Reading from the N-terminus, the 160-residue chain is DNA topoisomerase small subunit (160 aa).

As to quaternary structure, part of the DNA topoisomerase complex made of gp39, gp52 and gp60. Requires Mg(2+) as cofactor.

It carries out the reaction ATP-dependent breakage, passage and rejoining of double-stranded DNA.. Its function is as follows. Small subunit of the DNA topoisomerase that untwists superhelical DNA. Controls topological states of double-stranded DNA by transient breakage and subsequent rejoining of DNA strands. This is DNA topoisomerase small subunit (60) from Enterobacteria phage T4 (Bacteriophage T4).